A 561-amino-acid chain; its full sequence is MSPPGSAAGESAGGGGGGGGSGVPEEPMASADEGPAREEQRPIQPSFTKSLCRESHWKCLLLSLLMYGCLGAVAWCHVTTVTRLTFSSAYQGNSLMYHDSPCSNGYVYIPLAFLLMLYAVYLVECWHCQARHELQHRVDVSSVQERVGRMQQATPCIWWKAISYHYVRRTRQVTRYRNGDAYTTTQVYHERVNTHVAEAEFDYARCGVRDVSKTLVGLEGAPATRLRFTKCFSFASVEAENAYLCQRARFFAENEGLDDYMEAREGMHLKNVDFREFMVAFPDPARPPWYACSSAFWAAALLTLSWPLRVLAEYRTAYAHYHVEKLFGLEGPGSASSVGGGLSPSDELLPPLTHRLPRVNTVDSTELEWHIRSNQQLVPSYSEVLLMDLVELGSRCGGPGGSYVPRCRYGGVGGPGAAGVTPHWRSCEHCQRAVSSSSIFSRSALSICASPRAAQGPGASAGCGGSRFSLSRLYGSRRSCLWRSRSGSVNEASCPTEQTRLSSQASMRDNEEDEDEEEAGPPPPYQDALCFPVLIVHRQEGCLGHSHRSLHRHGSCVETSL.

The segment covering 1-10 has biased composition (low complexity); sequence MSPPGSAAGE. The tract at residues 1–42 is disordered; it reads MSPPGSAAGESAGGGGGGGGSGVPEEPMASADEGPAREEQRP. A compositionally biased stretch (gly residues) spans 11–22; it reads SAGGGGGGGGSG. 2 helical membrane passes run 59-79 and 106-126; these read CLLL…CHVT and YVYI…VECW. Polar residues predominate over residues 489 to 507; the sequence is VNEASCPTEQTRLSSQASM. The interval 489–523 is disordered; that stretch reads VNEASCPTEQTRLSSQASMRDNEEDEDEEEAGPPP. Residues 510–519 are compositionally biased toward acidic residues; that stretch reads NEEDEDEEEA.

Belongs to the TMEM151 family.

The protein localises to the membrane. In Mus musculus (Mouse), this protein is Transmembrane protein 151B (Tmem151b).